Reading from the N-terminus, the 353-residue chain is Methylthioribose-1-phosphate isomerase (353 aa).

Residue D241 is the Proton donor of the active site.

Belongs to the eIF-2B alpha/beta/delta subunits family. MtnA subfamily.

The protein resides in the cytoplasm. Its subcellular location is the nucleus. It carries out the reaction 5-(methylsulfanyl)-alpha-D-ribose 1-phosphate = 5-(methylsulfanyl)-D-ribulose 1-phosphate. Its pathway is amino-acid biosynthesis; L-methionine biosynthesis via salvage pathway; L-methionine from S-methyl-5-thio-alpha-D-ribose 1-phosphate: step 1/6. Functionally, catalyzes the interconversion of methylthioribose-1-phosphate (MTR-1-P) into methylthioribulose-1-phosphate (MTRu-1-P). In Danio rerio (Zebrafish), this protein is Methylthioribose-1-phosphate isomerase (mri1).